Consider the following 555-residue polypeptide: Heterochromatin protein 1-binding protein 3 (555 aa).

Residue A2 is modified to N-acetylalanine. A Phosphoserine modification is found at S6. The segment at 29–134 is disordered; that stretch reads KLGEKVEDNT…KEKKVKKTIP (106 aa). At T51 the chain carries Phosphothreonine. The span at 51 to 67 shows a compositional bias: basic and acidic residues; the sequence is TPPKSKLAEGVEEKPEP. K64 is covalently cross-linked (Glycyl lysine isopeptide (Lys-Gly) (interchain with G-Cter in SUMO2)). At T85 the chain carries Phosphothreonine. Residue K97 forms a Glycyl lysine isopeptide (Lys-Gly) (interchain with G-Cter in SUMO2) linkage. A compositionally biased stretch (basic and acidic residues) spans 100-127; sequence PENEEKEENKPSEETKKDEKDQSKEKEK. S142, S155, and S156 each carry phosphoserine. The 76-residue stretch at 157-232 folds into the H15 1 domain; that stretch reads PRPKMDAILT…GASGSFVVVQ (76 aa). K190 is subject to N6-acetyllysine. Residues 227-254 form a disordered region; it reads SFVVVQKSRKPPQKSRNRKNRSSAVDPE. The segment covering 233-247 has biased composition (basic residues); the sequence is KSRKPPQKSRNRKNR. A phosphoserine mark is found at S248 and S249. 2 consecutive H15 domains span residues 255 to 330 and 337 to 413; these read PQVK…QLKK and LGGS…QLCF. Residue K258 forms a Glycyl lysine isopeptide (Lys-Gly) (interchain with G-Cter in SUMO2) linkage. The interval 422–555 is disordered; the sequence is LFPKKEPDDS…TMKKSFKAKK (134 aa). A compositionally biased stretch (acidic residues) spans 430–452; it reads DSKDEDEDEDEDDSSEEDSEDEE. Residues S443, S444, and S448 each carry the phosphoserine modification. Over residues 491–512 the composition is skewed to basic residues; the sequence is GKTRPLPKKAPPKAKSPAKKAR. The span at 513 to 532 shows a compositional bias: low complexity; it reads PSPSVIKKPSGSSSKKPAAS. Residues 545 to 555 are compositionally biased toward basic residues; sequence STMKKSFKAKK.

In terms of assembly, interacts (via PxVxL motif) with CBX5.

The protein resides in the nucleus. It localises to the chromosome. Its function is as follows. Component of heterochromatin that maintains heterochromatin integrity during G1/S progression and regulates the duration of G1 phase to critically influence cell proliferative capacity. May play a role in hypoxia-induced oncogenesis. This is Heterochromatin protein 1-binding protein 3 (HP1BP3) from Bos taurus (Bovine).